A 697-amino-acid chain; its full sequence is Polyribonucleotide nucleotidyltransferase (697 aa).

Residues Asp488 and Asp494 each contribute to the Mg(2+) site. In terms of domain architecture, KH spans Pro555–Ile614. The S1 motif domain occupies Gly624–Lys692.

Belongs to the polyribonucleotide nucleotidyltransferase family. As to quaternary structure, component of the RNA degradosome, which is a multiprotein complex involved in RNA processing and mRNA degradation. Mg(2+) is required as a cofactor.

The protein localises to the cytoplasm. The enzyme catalyses RNA(n+1) + phosphate = RNA(n) + a ribonucleoside 5'-diphosphate. Involved in mRNA degradation. Catalyzes the phosphorolysis of single-stranded polyribonucleotides processively in the 3'- to 5'-direction. The sequence is that of Polyribonucleotide nucleotidyltransferase from Acinetobacter baylyi (strain ATCC 33305 / BD413 / ADP1).